The chain runs to 187 residues: Ribosome-recycling factor (187 aa).

It belongs to the RRF family.

The protein localises to the cytoplasm. Functionally, responsible for the release of ribosomes from messenger RNA at the termination of protein biosynthesis. May increase the efficiency of translation by recycling ribosomes from one round of translation to another. The polypeptide is Ribosome-recycling factor (Methylorubrum extorquens (strain CM4 / NCIMB 13688) (Methylobacterium extorquens)).